Consider the following 31-residue polypeptide: Cytochrome b6-f complex subunit 6 (31 aa).

Residues 4 to 24 (IISYFGLLLATLTFTIVLFVG) form a helical membrane-spanning segment.

This sequence belongs to the PetL family. In terms of assembly, the 4 large subunits of the cytochrome b6-f complex are cytochrome b6, subunit IV (17 kDa polypeptide, PetD), cytochrome f and the Rieske protein, while the 4 small subunits are PetG, PetL, PetM and PetN. The complex functions as a dimer.

It is found in the plastid. It localises to the chloroplast thylakoid membrane. Component of the cytochrome b6-f complex, which mediates electron transfer between photosystem II (PSII) and photosystem I (PSI), cyclic electron flow around PSI, and state transitions. PetL is important for photoautotrophic growth as well as for electron transfer efficiency and stability of the cytochrome b6-f complex. The sequence is that of Cytochrome b6-f complex subunit 6 from Staurastrum punctulatum (Green alga).